The chain runs to 172 residues: MSVKSILTEPNKLLRQISKPVENVGDEERRLMDDMLDTMYAAPGIGLAAIQIGVPKRIIVMDISRDEDKKEPRYFVNPVIKNKNDITSKYEEGCLSVPDQFAEIERPNECEVEYLDYNGKKQLLKADGLLATCIQHEMDHLEGVLFIDYLSKLKKSMIIKKLSKIKSNRIIV.

Residues Cys-94 and His-136 each coordinate Fe cation. Glu-137 is a catalytic residue. Position 140 (His-140) interacts with Fe cation.

Belongs to the polypeptide deformylase family. The cofactor is Fe(2+).

It carries out the reaction N-terminal N-formyl-L-methionyl-[peptide] + H2O = N-terminal L-methionyl-[peptide] + formate. In terms of biological role, removes the formyl group from the N-terminal Met of newly synthesized proteins. Requires at least a dipeptide for an efficient rate of reaction. N-terminal L-methionine is a prerequisite for activity but the enzyme has broad specificity at other positions. In Pelagibacter ubique (strain HTCC1062), this protein is Peptide deformylase.